The primary structure comprises 691 residues: DNA ligase (691 aa).

Residues 41–45, 90–91, and glutamate 130 contribute to the NAD(+) site; these read DAEYD and SL. Lysine 132 functions as the N6-AMP-lysine intermediate in the catalytic mechanism. Positions 153, 190, 307, and 331 each coordinate NAD(+). 4 residues coordinate Zn(2+): cysteine 425, cysteine 428, cysteine 443, and cysteine 449. Residues 610–691 enclose the BRCT domain; the sequence is APQGVLAGKT…MHTLLEGHAR (82 aa).

The protein belongs to the NAD-dependent DNA ligase family. LigA subfamily. Mg(2+) is required as a cofactor. Requires Mn(2+) as cofactor.

The enzyme catalyses NAD(+) + (deoxyribonucleotide)n-3'-hydroxyl + 5'-phospho-(deoxyribonucleotide)m = (deoxyribonucleotide)n+m + AMP + beta-nicotinamide D-nucleotide.. DNA ligase that catalyzes the formation of phosphodiester linkages between 5'-phosphoryl and 3'-hydroxyl groups in double-stranded DNA using NAD as a coenzyme and as the energy source for the reaction. It is essential for DNA replication and repair of damaged DNA. This chain is DNA ligase, found in Burkholderia pseudomallei (strain 668).